Consider the following 66-residue polypeptide: MAFLKKSLFLVLFLGLVSLSICEEEKRETEEEEYNQEDDDKSEEKRFLSLIPTAINAVSALAKHFG.

A signal peptide spans 1-22 (MAFLKKSLFLVLFLGLVSLSIC). The propeptide occupies 23-44 (EEEKRETEEEEYNQEDDDKSEE). Phenylalanine 65 carries the post-translational modification Phenylalanine amide.

In terms of tissue distribution, expressed by the skin glands.

The protein resides in the secreted. Has antimicrobial activity. In Pithecopus azureus (Orange-legged monkey tree frog), this protein is Phylloseptin-Az3.